Consider the following 633-residue polypeptide: UvrABC system protein C (633 aa).

Residues 37-115 form the GIY-YIG domain; the sequence is PKPGVYRMFG…IKSLKPRFNI (79 aa). The region spanning 225–260 is the UVR domain; sequence NALREDLQTRMAQASEAMDFETAAKLRDRIRAIAAV.

This sequence belongs to the UvrC family. In terms of assembly, interacts with UvrB in an incision complex.

The protein resides in the cytoplasm. In terms of biological role, the UvrABC repair system catalyzes the recognition and processing of DNA lesions. UvrC both incises the 5' and 3' sides of the lesion. The N-terminal half is responsible for the 3' incision and the C-terminal half is responsible for the 5' incision. The sequence is that of UvrABC system protein C from Maricaulis maris (strain MCS10) (Caulobacter maris).